The sequence spans 962 residues: Translation initiation factor IF-2 (962 aa).

The span at Arg52–Gln77 shows a compositional bias: basic and acidic residues. 2 disordered regions span residues Arg52 to Val87 and Ala121 to Val378. The span at Ser78–Val87 shows a compositional bias: polar residues. Composition is skewed to basic and acidic residues over residues Glu123 to Glu183, Asp197 to Ala250, and Pro267 to Glu278. The segment covering Thr342 to Gly355 has biased composition (gly residues). The tr-type G domain maps to Pro462–Thr631. A G1 region spans residues Gly471 to Thr478. Gly471–Thr478 lines the GTP pocket. The tract at residues Gly496 to His500 is G2. The tract at residues Asp517–Gly520 is G3. GTP-binding positions include Asp517–His521 and Asn571–Asp574. Residues Asn571–Asp574 are G4. The tract at residues Ser607–Lys609 is G5.

Belongs to the TRAFAC class translation factor GTPase superfamily. Classic translation factor GTPase family. IF-2 subfamily.

It localises to the cytoplasm. One of the essential components for the initiation of protein synthesis. Protects formylmethionyl-tRNA from spontaneous hydrolysis and promotes its binding to the 30S ribosomal subunits. Also involved in the hydrolysis of GTP during the formation of the 70S ribosomal complex. The chain is Translation initiation factor IF-2 from Cupriavidus necator (strain ATCC 17699 / DSM 428 / KCTC 22496 / NCIMB 10442 / H16 / Stanier 337) (Ralstonia eutropha).